The following is a 203-amino-acid chain: Endoplasmic reticulum transmembrane protein 3 (203 aa).

The Lumenal portion of the chain corresponds to Met-1–Thr-6. The helical transmembrane segment at Leu-7–Pro-27 threads the bilayer. Residues Ser-28–Ser-45 lie on the Cytoplasmic side of the membrane. Residues Thr-46 to Ile-66 form a helical membrane-spanning segment. The Lumenal portion of the chain corresponds to Asn-67 to Thr-110. A helical membrane pass occupies residues Gly-111–Leu-131. Residues Thr-132 to Asn-203 lie on the Cytoplasmic side of the membrane. A disordered region spans residues Pro-142–Asp-171.

It belongs to the BCAP29/BCAP31 family.

The protein localises to the endoplasmic reticulum membrane. Functionally, may play a role in anterograde transport of membrane proteins from the endoplasmic reticulum to the Golgi. May be involved in invertase secretion. The protein is Endoplasmic reticulum transmembrane protein 3 (YET3) of Saccharomyces cerevisiae (strain ATCC 204508 / S288c) (Baker's yeast).